A 357-amino-acid chain; its full sequence is Putative F-box protein At5g50220 (357 aa).

The F-box domain maps to 27 to 73 (IAEDIGIPIDLMVEILKKLPAKSLIKFQCVSKQWSSIIGSSRDFIDS).

The protein is Putative F-box protein At5g50220 of Arabidopsis thaliana (Mouse-ear cress).